The primary structure comprises 77 residues: Cell division topological specificity factor (77 aa).

This sequence belongs to the MinE family.

Prevents the cell division inhibition by proteins MinC and MinD at internal division sites while permitting inhibition at polar sites. This ensures cell division at the proper site by restricting the formation of a division septum at the midpoint of the long axis of the cell. The chain is Cell division topological specificity factor from Helicobacter pylori (strain P12).